Consider the following 492-residue polypeptide: Trigger factor (492 aa).

Residues 169–254 (GDRVSIDYVG…VKEVSKPGEL (86 aa)) enclose the PPIase FKBP-type domain. A disordered region spans residues 441–492 (LMADDEDAETTTKAKPAKKAAAKKAEAKANEDEAEEPKKKAAPKKKAAKDAE). A compositionally biased stretch (basic and acidic residues) spans 463-479 (KKAEAKANEDEAEEPKK). Residues 480–492 (KAAPKKKAAKDAE) show a composition bias toward basic residues.

This sequence belongs to the FKBP-type PPIase family. Tig subfamily.

Its subcellular location is the cytoplasm. The catalysed reaction is [protein]-peptidylproline (omega=180) = [protein]-peptidylproline (omega=0). In terms of biological role, involved in protein export. Acts as a chaperone by maintaining the newly synthesized protein in an open conformation. Functions as a peptidyl-prolyl cis-trans isomerase. This chain is Trigger factor, found in Mesorhizobium japonicum (strain LMG 29417 / CECT 9101 / MAFF 303099) (Mesorhizobium loti (strain MAFF 303099)).